The chain runs to 236 residues: Zinc finger AN1 domain-containing stress-associated protein 13 (236 aa).

Disordered stretches follow at residues 48–81 (KEGR…PGKR) and 150–173 (TVPE…AKTK). Over residues 66-75 (RLQLPTTSIV) the composition is skewed to polar residues. The AN1-type; degenerate zinc-finger motif lies at 170 to 216 (AKTKSRCAACGRRVGLMGFECRCGAVFCGAHPLLGQARLWLRLQGRA). Residues Cys176, Cys179, Cys197, and His200 each coordinate Zn(2+).

In terms of biological role, may be involved in environmental stress response. The protein is Zinc finger AN1 domain-containing stress-associated protein 13 (SAP13) of Oryza sativa subsp. japonica (Rice).